A 414-amino-acid chain; its full sequence is Histidine--tRNA ligase (414 aa).

It belongs to the class-II aminoacyl-tRNA synthetase family. As to quaternary structure, homodimer.

The protein localises to the cytoplasm. It catalyses the reaction tRNA(His) + L-histidine + ATP = L-histidyl-tRNA(His) + AMP + diphosphate + H(+). The chain is Histidine--tRNA ligase (hisS) from Mycoplasma genitalium (strain ATCC 33530 / DSM 19775 / NCTC 10195 / G37) (Mycoplasmoides genitalium).